The chain runs to 1671 residues: Fatty acid synthase alpha subunit aflA (1671 aa).

Residues 40 to 60 form a disordered region; that stretch reads ITEEAPTEQPPLSTPPSLPQT. Residues 47 to 58 are compositionally biased toward pro residues; sequence EQPPLSTPPSLP. The Carrier domain maps to 75–153; sequence DVALSRVQIV…DANPTVQLGK (79 aa). S113 carries the O-(pantetheine 4'-phosphoryl)serine modification. The tract at residues 492 to 729 is ketoreductase (KR) domain; sequence GKTFLVTGAG…AMLLTPDFVA (238 aa). The Ketosynthase family 3 (KS3) domain maps to 926–1428; sequence MEVLQEVAVE…QKGGQVVGVA (503 aa). The active-site For beta-ketoacyl synthase activity is C1113. Over residues 1244–1270 the composition is skewed to low complexity; the sequence is SMISVTSRPSSRSSTSSEVSDKSSLTS. The interval 1244–1288 is disordered; the sequence is SMISVTSRPSSRSSTSSEVSDKSSLTSITSISNPAPRAQRARSTT. Catalysis depends on for beta-ketoacyl synthase activity residues H1313 and H1354. Positions 1497–1521 are disordered; it reads PSTGQYRFRSDATPALDDDALPPPG. Residue D1552 participates in Mg(2+) binding. Acetyl-CoA is bound by residues 1552–1554, 1598–1608, 1622–1625, and 1652–1654; these read DLV, EAVFKCLQTHS, HGGN, and ISY. S1653 contacts Mg(2+).

This sequence belongs to the thiolase-like superfamily. Fungal fatty acid synthetase subunit alpha family. In terms of assembly, [Alpha(6)beta(6)] hexamers of two multifunctional subunits (alpha and beta). 4'-phosphopantetheine is transferred from CoA to a specific serine of the acyl carrier domain by the C-terminal PPT domain. This modification is essential for activity because fatty acids are bound in thioester linkage to the sulfhydryl of the prosthetic group.

It carries out the reaction acetyl-CoA + n malonyl-CoA + 2n NADPH + 4n H(+) = a long-chain-acyl-CoA + n CoA + n CO2 + 2n NADP(+).. The enzyme catalyses a fatty acyl-[ACP] + malonyl-[ACP] + H(+) = a 3-oxoacyl-[ACP] + holo-[ACP] + CO2. The catalysed reaction is a (3R)-hydroxyacyl-[ACP] + NADP(+) = a 3-oxoacyl-[ACP] + NADPH + H(+). Its pathway is mycotoxin biosynthesis; aflatoxin biosynthesis. In terms of biological role, fatty acid synthase alpha subunit; part of the gene cluster that mediates the biosynthesis of aflatoxins, a group of polyketide-derived furanocoumarins, and part of the most toxic and carcinogenic compounds among the known mycotoxins. The four major aflatoxins produced by A.parasiticus are aflatoxin B1 (AFB1), aflatoxin B2 (AFB2), aflatoxin G1 (AFG1) and aflatoxin G2 (AFG2). Within the aflatoxin pathway, the fungal fatty acid synthase aflA/aflB provides the hexanoyl starter unit to the acyl-carrier protein (ACP) domain of the norsolorinic acid synthase to allow the first step of the pathway. The biosynthesis of aflatoxins begins with the norsolorinic acid synthase aflC that combines a hexanoyl starter unit produced by the fatty acid synthase aflA/aflB and 7 malonyl-CoA extender units to synthesize the precursor NOR. The second step is the conversion of NOR to averantin (AVN) and requires the norsolorinic acid ketoreductase aflD, which catalyzes the dehydration of norsolorinic acid to form (1'S)-averantin. The norsolorinic acid reductases aflE and aflF may also play a role in the conversion of NOR to AVN. The cytochrome P450 monooxygenase aflG then catalyzes the hydroxylation of AVN to 5'hydroxyaverantin (HAVN). The next step is performed by the 5'-hydroxyaverantin dehydrogenase aflH that transforms HAVN to 5'-oxoaverantin (OAVN) which is further converted to averufin (AVF) by aflK that plays a dual role in the pathway, as a 5'-oxoaverantin cyclase that mediates conversion of 5'-oxoaverantin, as well as a versicolorin B synthase in a later step in the pathway. The averufin oxidase aflI catalyzes the conversion of AVF to versiconal hemiacetal acetate (VHA). VHA is then the substrate for the versiconal hemiacetal acetate esterase aflJ to yield versiconal (VAL). Versicolorin B synthase aflK then converts VAL to versicolorin B (VERB) by closing the bisfuran ring of aflatoxin which is required for DNA-binding, thus giving to aflatoxin its activity as a mutagen. Then, the activity of the versicolorin B desaturase aflL leads to versicolorin A (VERA). A branch point starts from VERB since it can also be converted to dihydrodemethylsterigmatocystin (DMDHST), probably also by aflL, VERA being a precursor for aflatoxins B1 and G1, and DMDHST for aflatoxins B2 and G2. Next, the versicolorin reductase aflM and the cytochrome P450 monooxygenase aflN are involved in conversion of VERA to demethylsterigmatocystin (DMST). AflX and aflY seem also involved in this step, through probable aflX-mediated epoxide ring-opening step following versicolorin A oxidation and aflY-mediated Baeyer-Villiger oxidation required for the formation of the xanthone ring. The methyltransferase aflO then leads to the modification of DMST to sterigmatocystin (ST), and of DMDHST to dihydrosterigmatocystin (DHST). Both ST and DHST are then substrates of the O-methyltransferase aflP to yield O-methylsterigmatocystin (OMST) and dihydro-O-methylsterigmatocystin (DHOMST), respectively. Finally OMST is converted to aflatoxins B1 and G1, and DHOMST to aflatoxins B2 and G2, via the action of several enzymes including O-methylsterigmatocystin oxidoreductase aflQ, the cytochrome P450 monooxygenase aflU, but also the NADH-dependent flavin oxidoreductase nadA which is specifically required for the synthesis of AFG1. In Aspergillus parasiticus (strain ATCC 56775 / NRRL 5862 / SRRC 143 / SU-1), this protein is Fatty acid synthase alpha subunit aflA.